Consider the following 752-residue polypeptide: DNA topoisomerase 4 subunit A (752 aa).

The Topo IIA-type catalytic domain maps to 31 to 494; it reads LPFIGDGLKP…EAKAMSEHDM (464 aa). The O-(5'-phospho-DNA)-tyrosine intermediate role is filled by Tyr-120. 2 disordered regions span residues 472 to 492 and 718 to 752; these read YGDD…MSEH and TGER…DSEE. 2 stretches are compositionally biased toward basic and acidic residues: residues 473–492 and 732–743; these read GDDR…MSEH and QRIDRVEIDSPR.

The protein belongs to the type II topoisomerase GyrA/ParC subunit family. ParC type 1 subfamily. Heterotetramer composed of ParC and ParE.

It is found in the cell membrane. The catalysed reaction is ATP-dependent breakage, passage and rejoining of double-stranded DNA.. In terms of biological role, topoisomerase IV is essential for chromosome segregation. It relaxes supercoiled DNA. Performs the decatenation events required during the replication of a circular DNA molecule. The chain is DNA topoisomerase 4 subunit A from Escherichia coli O157:H7.